The sequence spans 338 residues: ABC transporter I family member 6, chloroplastic (338 aa).

Residues 1–66 (MAGVNLQLRH…RTTRRSVIVS (66 aa)) constitute a chloroplast transit peptide. An ABC transporter domain is found at 92–338 (LEVRDLRAVI…EKEGYKAISG (247 aa)). 126–133 (GKNGSGKS) provides a ligand contact to ATP.

It belongs to the ABC transporter superfamily. ABCI family. In terms of assembly, interacts with NAP6. Present in all organs, with higher levels in aerial parts.

It is found in the plastid. It localises to the chloroplast. Functionally, essential protein. Required during embryo development, especially at early stages. Involved in chloroplast differentiation. The sequence is that of ABC transporter I family member 6, chloroplastic (ABCI6) from Arabidopsis thaliana (Mouse-ear cress).